The chain runs to 500 residues: Glycerol kinase (500 aa).

Thr13 lines the ADP pocket. Residues Thr13, Thr14, and Ser15 each coordinate ATP. Thr13 provides a ligand contact to sn-glycerol 3-phosphate. Arg17 lines the ADP pocket. Sn-glycerol 3-phosphate contacts are provided by Arg83, Glu84, Tyr135, and Asp244. The glycerol site is built by Arg83, Glu84, Tyr135, Asp244, and Gln245. Residues Thr266 and Gly309 each contribute to the ADP site. Thr266, Gly309, Gln313, and Gly410 together coordinate ATP. Positions 410 and 414 each coordinate ADP.

The protein belongs to the FGGY kinase family.

It catalyses the reaction glycerol + ATP = sn-glycerol 3-phosphate + ADP + H(+). The protein operates within polyol metabolism; glycerol degradation via glycerol kinase pathway; sn-glycerol 3-phosphate from glycerol: step 1/1. Inhibited by fructose 1,6-bisphosphate (FBP). In terms of biological role, key enzyme in the regulation of glycerol uptake and metabolism. Catalyzes the phosphorylation of glycerol to yield sn-glycerol 3-phosphate. This Burkholderia pseudomallei (strain K96243) protein is Glycerol kinase.